Consider the following 262-residue polypeptide: Shikimate dehydrogenase (NADP(+)) (262 aa).

Shikimate is bound by residues 14 to 16 (SAS) and Thr60. The active-site Proton acceptor is Lys64. The shikimate site is built by Asn85 and Asp100. Residues 121–125 (GAGGA), 145–150 (NRTAER), and Phe203 contribute to the NADP(+) site. A shikimate-binding site is contributed by Tyr205. NADP(+) is bound at residue Gly227.

The protein belongs to the shikimate dehydrogenase family. Homodimer.

The catalysed reaction is shikimate + NADP(+) = 3-dehydroshikimate + NADPH + H(+). The protein operates within metabolic intermediate biosynthesis; chorismate biosynthesis; chorismate from D-erythrose 4-phosphate and phosphoenolpyruvate: step 4/7. Functionally, involved in the biosynthesis of the chorismate, which leads to the biosynthesis of aromatic amino acids. Catalyzes the reversible NADPH linked reduction of 3-dehydroshikimate (DHSA) to yield shikimate (SA). In Pyrobaculum aerophilum (strain ATCC 51768 / DSM 7523 / JCM 9630 / CIP 104966 / NBRC 100827 / IM2), this protein is Shikimate dehydrogenase (NADP(+)).